The primary structure comprises 88 residues: Small ribosomal subunit protein bS16c (88 aa).

It belongs to the bacterial ribosomal protein bS16 family.

The protein resides in the plastid. It is found in the chloroplast. This chain is Small ribosomal subunit protein bS16c, found in Citrus sinensis (Sweet orange).